Here is a 226-residue protein sequence, read N- to C-terminus: Transmembrane protein 204 (226 aa).

Topologically, residues 1–5 are cytoplasmic; it reads MTVQK. The helical transmembrane segment at 6-26 threads the bilayer; that stretch reads LVATAVLVALVSLILNNAAAF. The Extracellular segment spans residues 27-103; it reads TPNWVYQTLE…LQFDMMRACN (77 aa). The chain crosses the membrane as a helical span at residues 104–124; it reads LVATAALAVGQITFILGLTGL. Over 125–136 the chain is Cytoplasmic; that stretch reads PLMSPESQCWEE. Residues 137-157 form a helical membrane-spanning segment; it reads AMAAAFQLASFVLVIGLVTFY. Over 158 to 170 the chain is Extracellular; the sequence is RIGPYTNLSWSCY. The N-linked (GlcNAc...) asparagine glycan is linked to asparagine 164. A helical membrane pass occupies residues 171–191; that stretch reads LNIGACLLATLAAAMLIWNIL. Topologically, residues 192-226 are cytoplasmic; it reads HRREDCMAPRVIVISRSLTARFRRGLDNDYVESPC.

It localises to the cell junction. The protein resides in the adherens junction. Its subcellular location is the cell membrane. Its function is as follows. Can influence paracellular permeability. Appears to be involved in cell-cell interactions through adherens. This is Transmembrane protein 204 (Tmem204) from Rattus norvegicus (Rat).